The chain runs to 221 residues: Probable hydrogenase maturation factor HypB (221 aa).

Residues 35–196 (AFDFMGAIGS…KRINPDAEVV (162 aa)) form a G-domain region. Ni(2+) contacts are provided by cysteine 95 and histidine 96. Residues cysteine 95, histidine 96, histidine 100, histidine 104, and cysteine 127 each contribute to the Zn(2+) site. Cysteine 127 contacts Ni(2+).

Belongs to the SIMIBI class G3E GTPase family. HypB/HupM subfamily. As to quaternary structure, homodimer.

Functionally, involved in the maturation of [NiFe] hydrogenases. Required for nickel insertion into the metal center of the hydrogenase. Exhibits a low intrinsic GTPase activity, which is essential for nickel insertion. The chain is Probable hydrogenase maturation factor HypB from Methanocaldococcus jannaschii (strain ATCC 43067 / DSM 2661 / JAL-1 / JCM 10045 / NBRC 100440) (Methanococcus jannaschii).